A 437-amino-acid chain; its full sequence is tRNA-2-methylthio-N(6)-dimethylallyladenosine synthase (437 aa).

Residues 1 to 115 (MKVYIETMGC…ISQVIHKEKA (115 aa)) enclose the MTTase N-terminal domain. Cys10, Cys46, Cys78, Cys148, Cys152, and Cys155 together coordinate [4Fe-4S] cluster. The Radical SAM core domain maps to 134–367 (KKAQIRSLLN…QNRHKEILEE (234 aa)). Residues 370–436 (KLEVGKTHVV…KGRLMAATKG (67 aa)) enclose the TRAM domain.

The protein belongs to the methylthiotransferase family. MiaB subfamily. In terms of assembly, monomer. It depends on [4Fe-4S] cluster as a cofactor.

The protein localises to the cytoplasm. It catalyses the reaction N(6)-dimethylallyladenosine(37) in tRNA + (sulfur carrier)-SH + AH2 + 2 S-adenosyl-L-methionine = 2-methylsulfanyl-N(6)-dimethylallyladenosine(37) in tRNA + (sulfur carrier)-H + 5'-deoxyadenosine + L-methionine + A + S-adenosyl-L-homocysteine + 2 H(+). Functionally, catalyzes the methylthiolation of N6-(dimethylallyl)adenosine (i(6)A), leading to the formation of 2-methylthio-N6-(dimethylallyl)adenosine (ms(2)i(6)A) at position 37 in tRNAs that read codons beginning with uridine. The polypeptide is tRNA-2-methylthio-N(6)-dimethylallyladenosine synthase (Helicobacter pylori (strain ATCC 700392 / 26695) (Campylobacter pylori)).